A 316-amino-acid chain; its full sequence is Cobalamin biosynthesis protein CobD (316 aa).

Transmembrane regions (helical) follow at residues 45 to 65, 78 to 100, 151 to 171, 209 to 229, and 291 to 311; these read FSPY…ALGV, PVLY…SLAF, DGVI…AMTY, LTWL…KGAL, and ISLL…FYLV.

It belongs to the CobD/CbiB family.

The protein localises to the cell membrane. The protein operates within cofactor biosynthesis; adenosylcobalamin biosynthesis. In terms of biological role, converts cobyric acid to cobinamide by the addition of aminopropanol on the F carboxylic group. This chain is Cobalamin biosynthesis protein CobD, found in Streptococcus sanguinis (strain SK36).